Consider the following 163-residue polypeptide: MKYLLISLALWLGMVGIHGTELELSETQRRGLQVALEEFHKHPPVQWAFQEIGVDNANDMVFSAGTFVRLEFKLQQTSCFKKDWKNPECKIKANGRKRKCLACIKLDPRGKVLGRMVHCPILKQGLQQELQESQCNRITQAGEDPRSHFFPGQFAFSRALKHK.

The signal sequence occupies residues 1–20 (MKYLLISLALWLGMVGIHGT). Cystine bridges form between cysteine 79–cysteine 89, cysteine 100–cysteine 119, and cysteine 103–cysteine 135. The propeptide occupies 158-163 (RALKHK).

Post-translationally, secreted in an inactive precursor form, prochemerin, which is proteolytically processed by a variety of extracellular proteases to generate forms with differing levels of bioactivity. For example, the removal of six amino acids results in chemerin-157, which exhibits the highest activity, while removal of seven amino acids results in chemerin-156 which has slightly less activity. Some proteases are able to cleave at more than one site and chemerin forms may be sequentially processed by different enzymes to modulate activity levels. The coordinated expression and activity of chemerin-modifying enzymes is essential for regulating its bioactivation, inactivation and, consequently, biological function. Cathepsin G cleaves seven C-terminal amino acids from prochemerin (chemerin-156), elastase is able to cleave six (chemerin-157), eight (chemerin-155) or eleven (chemerin-152), plasmin cleaves five amino acids (chemerin-158), and tryptase cleaves five (chemerin-158) or eight (chemerin-155). Multiple cleavages might be required to fully activate chemerin, with an initial tryptase cleavage resulting in chemerin with low activity (chemerin-158), and a second cleavage by carboxypeptidase N or B producing highly active chemerin (chemerin-157).

The protein resides in the secreted. Functionally, adipocyte-secreted protein (adipokine) that regulates adipogenesis, metabolism and inflammation through activation of the chemokine-like receptor 1 (CMKLR1). Also acts as a ligand for CMKLR2. Can also bind to C-C chemokine receptor-like 2 (CCRL2), but with a lower affinity than it does to CMKLR1 or CMKLR2. Positively regulates adipocyte differentiation, modulates the expression of adipocyte genes involved in lipid and glucose metabolism and might play a role in angiogenesis, a process essential for the expansion of white adipose tissue. Also acts as a pro-inflammatory adipokine, causing an increase in secretion of pro-inflammatory and prodiabetic adipokines, which further impair adipose tissue metabolic function and have negative systemic effects including impaired insulin sensitivity, altered glucose and lipid metabolism, and a decrease in vascular function in other tissues. Can have both pro- and anti-inflammatory properties depending on the modality of enzymatic cleavage by different classes of proteases. Acts as a chemotactic factor for leukocyte populations expressing CMKLR1, particularly immature plasmacytoid dendritic cells, but also immature myeloid DCs, macrophages and natural killer cells. Exerts an anti-inflammatory role by preventing TNF/TNFA-induced VCAM1 expression and monocytes adhesion in vascular endothelial cells. The effect is mediated via inhibiting activation of NF-kappa-B and CRK/p38 through stimulation of AKT1/NOS3 signaling and nitric oxide production. Its dual role in inflammation and metabolism might provide a link Exhibits an antimicrobial function in the skin. This Cricetulus griseus (Chinese hamster) protein is Retinoic acid receptor responder protein 2 (RARRES2).